We begin with the raw amino-acid sequence, 155 residues long: Small ribosomal subunit protein uS7c (155 aa).

This sequence belongs to the universal ribosomal protein uS7 family. As to quaternary structure, part of the 30S ribosomal subunit.

It localises to the plastid. Its subcellular location is the chloroplast. One of the primary rRNA binding proteins, it binds directly to 16S rRNA where it nucleates assembly of the head domain of the 30S subunit. This Ginkgo biloba (Ginkgo) protein is Small ribosomal subunit protein uS7c (rps7).